A 705-amino-acid chain; its full sequence is MLTPIIRKFQYGQHTLTIETGMMARQATAAVMVSMDDTAVFVTVVGQKKAKPGQSFFPLTVNYQERTYAAGRIPGSFFRREGRPSEGETLTSRLIDRPIRPLFPDSFLNEVQVIATVVSLNPQVNPDIVAMIGASAALSLSGIPFNGPIGSARVGYINNQYVLNPTSDELKESSLDLVVAGTAGAVLMVESEADVLSEDQMLGAVVFGHEQQQIVIENINSLVAEAGKAKWDWQAPAVNEALHARVAELAEGRLGDAYHITEKQERYAQVDAIKSSVVETLLAQDETLDVSEIQDILGSVEKNVVRSRVLRGEPRIDGREKDMIRGLDVRTGVLPRTHGSALFTRGETQALVTATLGTARDAQNLDELMGEKTDSFLFHYNFPPYSVGETGMVGSPKRREIGHGRLAKRGVLAMMPKPEDFPYTVRVVSEITESNGSSSMASVCGASLALMDAGVPIKAAVAGIAMGLVKEQDNFVVLSDILGDEDHLGDMDFKVAGSRDGITALQMDIKIEGITREIMQVALNQAKGARLHILGVMEQAISTPRGDISQFAPRIHTIRINPDKIKDVIGKGGSVIRALTEETGTTIEIEDDGTVKIAATDGEKAKFAIRRIEEITAEIEVGRIYQGKVTRIVDFGAFVAIGGGKEGLVHISQIADKRVEKVTDYLQMGQEVPVKVLEVDRQGRVRLSIKEATAPEAGSPAPEAE.

Residues Asp-486 and Asp-492 each coordinate Mg(2+). Residues 553-612 (PRIHTIRINPDKIKDVIGKGGSVIRALTEETGTTIEIEDDGTVKIAATDGEKAKFAIRRI) enclose the KH domain. An S1 motif domain is found at 622-690 (GRIYQGKVTR…RQGRVRLSIK (69 aa)).

It belongs to the polyribonucleotide nucleotidyltransferase family. As to quaternary structure, component of the RNA degradosome, which is a multiprotein complex involved in RNA processing and mRNA degradation. The cofactor is Mg(2+).

The protein resides in the cytoplasm. It catalyses the reaction RNA(n+1) + phosphate = RNA(n) + a ribonucleoside 5'-diphosphate. Its function is as follows. Involved in mRNA degradation. Catalyzes the phosphorolysis of single-stranded polyribonucleotides processively in the 3'- to 5'-direction. The sequence is that of Polyribonucleotide nucleotidyltransferase from Serratia proteamaculans (strain 568).